Here is a 901-residue protein sequence, read N- to C-terminus: Mediator of RNA polymerase II transcription subunit 14 (901 aa).

Belongs to the Mediator complex subunit 14 family. As to quaternary structure, component of the Mediator complex.

The protein resides in the nucleus. Functionally, component of the Mediator complex, a coactivator involved in the regulated transcription of nearly all RNA polymerase II-dependent genes. Mediator functions as a bridge to convey information from gene-specific regulatory proteins to the basal RNA polymerase II transcription machinery. Mediator is recruited to promoters by direct interactions with regulatory proteins and serves as a scaffold for the assembly of a functional preinitiation complex with RNA polymerase II and the general transcription factors. The polypeptide is Mediator of RNA polymerase II transcription subunit 14 (RGR1) (Yarrowia lipolytica (strain CLIB 122 / E 150) (Yeast)).